The following is a 387-amino-acid chain: Pepsin II-2/3 (387 aa).

The first 15 residues, 1 to 15, serve as a signal peptide directing secretion; sequence MKWLLLLGLLALSEC. Positions 16–59 are cleaved as a propeptide — activation peptide; it reads IVHKVPLVRKKSLRKNLIEKGLLQDYLKTHTPNPATKYFPKETF. The Peptidase A1 domain occupies 75–384; it reads YFGTISIGTP…DRANNQLGLA (310 aa). D93 is a catalytic residue. A disulfide bond links C106 and C111. S129 carries the phosphoserine modification. Residues C267 and C271 are joined by a disulfide bond. D276 is a catalytic residue. A disulfide bond links C310 and C343.

The protein belongs to the peptidase A1 family.

It localises to the secreted. It carries out the reaction Preferential cleavage: hydrophobic, preferably aromatic, residues in P1 and P1' positions. Cleaves 1-Phe-|-Val-2, 4-Gln-|-His-5, 13-Glu-|-Ala-14, 14-Ala-|-Leu-15, 15-Leu-|-Tyr-16, 16-Tyr-|-Leu-17, 23-Gly-|-Phe-24, 24-Phe-|-Phe-25 and 25-Phe-|-Tyr-26 bonds in the B chain of insulin.. Shows particularly broad specificity; although bonds involving phenylalanine and leucine are preferred, many others are also cleaved to some extent. The chain is Pepsin II-2/3 from Oryctolagus cuniculus (Rabbit).